The sequence spans 521 residues: CDP-diacylglycerol--glycerol-3-phosphate 3-phosphatidyltransferase (521 aa).

Position 91-98 (A91–S98) interacts with ATP. 2 PLD phosphodiesterase domains span residues G177–Y203 and N419–A457. Catalysis depends on residues H182, K184, and D189.

This sequence belongs to the CDP-alcohol phosphatidyltransferase class-II family.

The protein localises to the mitochondrion. It carries out the reaction a CDP-1,2-diacyl-sn-glycerol + sn-glycerol 3-phosphate = a 1,2-diacyl-sn-glycero-3-phospho-(1'-sn-glycero-3'-phosphate) + CMP + H(+). The protein operates within phospholipid metabolism; phosphatidylglycerol biosynthesis; phosphatidylglycerol from CDP-diacylglycerol: step 1/2. Its function is as follows. Essential for the viability of mitochondrial petite mutant. Catalyzes the committed step to the synthesis of the acidic phospholipids. The sequence is that of CDP-diacylglycerol--glycerol-3-phosphate 3-phosphatidyltransferase (PGS1) from Saccharomyces cerevisiae (strain ATCC 204508 / S288c) (Baker's yeast).